Here is a 184-residue protein sequence, read N- to C-terminus: Shikimate kinase (184 aa).

12-17 (GSGKST) is an ATP binding site. Position 16 (Ser-16) interacts with Mg(2+). Substrate contacts are provided by Asp-34, Arg-58, and Gly-80. Arg-117 lines the ATP pocket. Arg-136 contributes to the substrate binding site. Position 153 (Arg-153) interacts with ATP. The tract at residues 163-184 (MSRLDDPTPNTSPSSTASGAAT) is disordered. Low complexity predominate over residues 169-184 (PTPNTSPSSTASGAAT).

It belongs to the shikimate kinase family. As to quaternary structure, monomer. The cofactor is Mg(2+).

It localises to the cytoplasm. It catalyses the reaction shikimate + ATP = 3-phosphoshikimate + ADP + H(+). The protein operates within metabolic intermediate biosynthesis; chorismate biosynthesis; chorismate from D-erythrose 4-phosphate and phosphoenolpyruvate: step 5/7. Its function is as follows. Catalyzes the specific phosphorylation of the 3-hydroxyl group of shikimic acid using ATP as a cosubstrate. This Mycobacterium marinum (strain ATCC BAA-535 / M) protein is Shikimate kinase.